The following is a 109-amino-acid chain: Ubiquitin-related modifier 1 homolog (109 aa).

1-thioglycine is present on Gly109. Gly109 is covalently cross-linked (Glycyl lysine isopeptide (Gly-Lys) (interchain with K-? in acceptor proteins)).

This sequence belongs to the URM1 family. Post-translationally, C-terminal thiocarboxylation occurs in 2 steps, it is first acyl-adenylated (-COAMP) via the hesA/moeB/thiF part of the MOCS3 homolog, then thiocarboxylated (-COSH) via the rhodanese domain of the MOCS3 homolog.

It is found in the cytoplasm. It participates in tRNA modification; 5-methoxycarbonylmethyl-2-thiouridine-tRNA biosynthesis. Acts as a sulfur carrier required for 2-thiolation of mcm(5)S(2)U at tRNA wobble positions of cytosolic tRNA(Lys), tRNA(Glu) and tRNA(Gln). Serves as sulfur donor in tRNA 2-thiolation reaction by being thiocarboxylated (-COSH) at its C-terminus by MOCS3. The sulfur is then transferred to tRNA to form 2-thiolation of mcm(5)S(2)U. Also acts as a ubiquitin-like protein (UBL) that is covalently conjugated via an isopeptide bond to lysine residues of target proteins. The thiocarboxylated form serves as substrate for conjugation and oxidative stress specifically induces the formation of UBL-protein conjugates. This Culex quinquefasciatus (Southern house mosquito) protein is Ubiquitin-related modifier 1 homolog.